Reading from the N-terminus, the 487-residue chain is MGDTGLRKRREDEKSIQSQEPKTTSLQKELGLISGISIIVGTIIGSGIFVSPKSVLSNTEAVGPCLIIWAACGVLATLGALCFAELGTMITKSGGEYPYLMEAYGPIPAYLFSWASLIVIKPTSFAIICLSFSEYVCAPFYVGCKPPQIVVKCLAAAAILFISTVNSLSVRLGSYVQNIFTAAKLVIVAIIIISGLVLLAQGNTKNFDNSFEGAQLSVGAISLAFYNGLWAYDGWNQLNYITEELRNPYRNLPLAIIIGIPLVTACYILMNVSYFTVMTATELLQSQAVAVTFGDRVLYPASWIVPLFVAFSTIGAANGTCFTAGRLIYVAGREGHMLKVLSYISVRRLTPAPAIIFYGIIATIYIIPGDINSLVNYFSFAAWLFYGLTILGLIVMRFTRKELERPIKVPVVIPVLMTLISVFLVLAPIISKPTWEYLYCVLFILSGLLFYFLFVHYKFGWAQKISKPITMHLQMLMEVVPPEEDPE.

The span at 1–15 (MGDTGLRKRREDEKS) shows a compositional bias: basic and acidic residues. A disordered region spans residues 1–22 (MGDTGLRKRREDEKSIQSQEPK). Residues 1–31 (MGDTGLRKRREDEKSIQSQEPKTTSLQKELG) are Cytoplasmic-facing. The residue at position 18 (S18) is a Phosphoserine. A helical transmembrane segment spans residues 32-55 (LISGISIIVGTIIGSGIFVSPKSV). Residue 43–47 (IIGSG) coordinates L-arginine. Residues 56–62 (LSNTEAV) are Extracellular-facing. Residues 63 to 84 (GPCLIIWAACGVLATLGALCFA) traverse the membrane as a helical segment. Residues 85-110 (ELGTMITKSGGEYPYLMEAYGPIPAY) lie on the Cytoplasmic side of the membrane. The chain crosses the membrane as a helical span at residues 111–137 (LFSWASLIVIKPTSFAIICLSFSEYVC). Residues 138-147 (APFYVGCKPP) are Extracellular-facing. 2 helical membrane-spanning segments follow: residues 148 to 169 (QIVV…NSLS) and 170 to 193 (VRLG…IIII). Residues 194-217 (SGLVLLAQGNTKNFDNSFEGAQLS) lie on the Extracellular side of the membrane. A helical membrane pass occupies residues 218 to 238 (VGAISLAFYNGLWAYDGWNQL). Position 233 (D233) interacts with L-arginine. Topologically, residues 239–251 (NYITEELRNPYRN) are cytoplasmic. The chain crosses the membrane as a helical span at residues 252-274 (LPLAIIIGIPLVTACYILMNVSY). Over 275–302 (FTVMTATELLQSQAVAVTFGDRVLYPAS) the chain is Extracellular. The chain crosses the membrane as a helical span at residues 303 to 325 (WIVPLFVAFSTIGAANGTCFTAG). The Cytoplasmic portion of the chain corresponds to 326–351 (RLIYVAGREGHMLKVLSYISVRRLTP). The next 2 helical transmembrane spans lie at 352–370 (APAI…IPGD) and 371–391 (INSL…LTIL). Residues 392-410 (GLIVMRFTRKELERPIKVP) are Cytoplasmic-facing. The chain crosses the membrane as a helical span at residues 411 to 431 (VVIPVLMTLISVFLVLAPIIS). The Extracellular segment spans residues 432–434 (KPT). The helical transmembrane segment at 435–450 (WEYLYCVLFILSGLLF) threads the bilayer. Over 451 to 487 (YFLFVHYKFGWAQKISKPITMHLQMLMEVVPPEEDPE) the chain is Cytoplasmic.

It belongs to the amino acid-polyamine-organocation (APC) superfamily. In terms of assembly, disulfide-linked heterodimer composed of the catalytic light chain subunit SLC7A9 and the heavy chain subunit SLC3A1. The heterodimer is the minimal functional unit. Assembles in heterotetramers (dimers of heterodimers) and higher order oligomers; the oligomerization is mediated by SLC3A1 likely to prevent degradation and facilitate heteromer trafficking to the plasma membrane. Interacts with CAV1. Expressed in the brush border membrane in the kidney (at protein level). Kidney, small intestine, liver and placenta.

The protein localises to the apical cell membrane. It is found in the cell membrane. The catalysed reaction is L-leucine(out) + L-arginine(in) = L-leucine(in) + L-arginine(out). It carries out the reaction L-histidine(out) + L-arginine(in) = L-histidine(in) + L-arginine(out). It catalyses the reaction L-arginine(in) + L-phenylalanine(out) = L-arginine(out) + L-phenylalanine(in). The enzyme catalyses L-cysteine(out) + L-arginine(in) = L-cysteine(in) + L-arginine(out). The catalysed reaction is L-cystine(out) + L-arginine(in) = L-cystine(in) + L-arginine(out). It carries out the reaction L-lysine(out) + L-arginine(in) = L-lysine(in) + L-arginine(out). Its function is as follows. Associates with SLC3A1 to form a functional transporter complex that mediates the electrogenic exchange between cationic amino acids and neutral amino acids, with a stoichiometry of 1:1. Has system b(0,+)-like activity with high affinity for extracellular cationic amino acids and L-cystine and lower affinity for intracellular neutral amino acids. Substrate exchange is driven by high concentration of intracellular neutral amino acids and the intracellular reduction of L-cystine to L-cysteine. Required for reabsorption of L-cystine and dibasic amino acids across the brush border membrane in renal proximal tubules. The protein is b(0,+)-type amino acid transporter 1 of Homo sapiens (Human).